The primary structure comprises 832 residues: Armadillo segment polarity protein (832 aa).

Polar residues predominate over residues 1-20; that stretch reads MSYQMPQNRTMSHNPYNSSD. Residues 1-24 are disordered; sequence MSYQMPQNRTMSHNPYNSSDMPMP. ARM repeat units lie at residues 146 to 185, 188 to 228, 230 to 269, 272 to 311, 356 to 395, 397 to 434, 483 to 524, 594 to 634, and 636 to 675; these read NYQD…QLSK, ASRH…NLSH, RQGL…NLLL, DGSK…ILAY, SSNK…NLSD, ATKV…NLTC, SESA…NLAL, ELNR…ELAV, and KEVA…KMSE. Residues 721 to 832 are disordered; the sequence is AYEGLYGQGP…QVAAWYDTDL (112 aa). Low complexity predominate over residues 767 to 777; that stretch reads PAGSNPNAGNN.

The protein belongs to the beta-catenin family.

It is found in the cytoplasm. It localises to the cell membrane. Its subcellular location is the cell junction. The protein localises to the adherens junction. Its function is as follows. May associate with CadN and participate in the transmission of developmental information. Can associate with alpha-catenin. Accumulates through wg signaling; arm function in wg signal transduction is required early in development for determination of neuroblast fate. Arm and Abl proteins function cooperatively at adherens junctions in both the CNS and epidermis. The chain is Armadillo segment polarity protein from Aedes aegypti (Yellowfever mosquito).